A 330-amino-acid polypeptide reads, in one-letter code: MIKAAIVGGSGYIGGELIRLLSMHPEVEITTITSRKFAGKKVHKVHPNLRGLNLRFTDKYEFDADVIFLAVPHGTSMRIIGEFLGSAKIIDLSADFRVSKDLYEKYYGSHEKPELIDKFVYGLPELHRKEIKRAELVANPGCNATAVILALYPFRDVTSEAIVDLKVSSSAGGRRENVASIHPERSHVVRVYKPFHHRHEAEVLQETGVKAMFTVHSVDIVRGLLATTYFKFEGSEKDLLKRLLMYRGEPFIRLVTDKGGLQRYPDPKYVIGSNFVDIGFSYDSENSRAIVFSALDNLIKGGAGQAVQNMNIMFGFDETLGLNYYPLYPG.

NADP(+) contacts are provided by residues Ser10 to Ile13 and Ser34 to Lys36. Residue Cys142 is part of the active site. Asn297 serves as a coordination point for NADP(+).

This sequence belongs to the NAGSA dehydrogenase family. Type 1 subfamily. LysY sub-subfamily.

It is found in the cytoplasm. The catalysed reaction is [amino-group carrier protein]-C-terminal-N-(1-carboxy-5-oxopentan-1-yl)-L-glutamine + phosphate + NADP(+) = [amino-group carrier protein]-C-terminal-N-(1-carboxy-5-phosphooxy-5-oxopentan-1-yl)-L-glutamine + NADPH + H(+). The enzyme catalyses [amino-group carrier protein]-C-terminal-gamma-(L-glutamyl-5-semialdehyde)-L-glutamate + phosphate + NADP(+) = [amino-group carrier protein]-C-terminal-gamma-(5-phospho-L-glutamyl)-L-glutamate + NADPH + H(+). It functions in the pathway amino-acid biosynthesis; L-lysine biosynthesis via AAA pathway; L-lysine from L-alpha-aminoadipate (Thermus route): step 3/5. The protein operates within amino-acid biosynthesis; L-arginine biosynthesis. Its function is as follows. Involved in both the arginine and lysine biosynthetic pathways. This chain is Putative [LysW]-L-2-aminoadipate/[LysW]-L-glutamate phosphate reductase, found in Pyrococcus abyssi (strain GE5 / Orsay).